The chain runs to 141 residues: Hemoglobin subunit alpha (141 aa).

Positions 1 to 141 (VLSPDDKKHV…VSTVLTSKYR (141 aa)) constitute a Globin domain. Ser-3 is modified (phosphoserine). Residues Lys-7 and Lys-11 each carry the N6-succinyllysine modification. Position 16 is an N6-acetyllysine; alternate (Lys-16). Position 16 is an N6-succinyllysine; alternate (Lys-16). Tyr-24 bears the Phosphotyrosine mark. Residue Ser-35 is modified to Phosphoserine. The residue at position 40 (Lys-40) is an N6-succinyllysine. Ser-49 is subject to Phosphoserine. His-58 contributes to the O2 binding site. His-87 lines the heme b pocket. Phosphoserine is present on Ser-102. A Phosphothreonine modification is found at Thr-108. Phosphoserine is present on residues Ser-124 and Ser-131. A phosphothreonine mark is found at Thr-134 and Thr-137. Ser-138 bears the Phosphoserine mark.

The protein belongs to the globin family. Heterotetramer of two alpha chains and two beta chains. As to expression, red blood cells.

Involved in oxygen transport from the lung to the various peripheral tissues. Functionally, hemopressin acts as an antagonist peptide of the cannabinoid receptor CNR1. Hemopressin-binding efficiently blocks cannabinoid receptor CNR1 and subsequent signaling. This Cercocebus atys (Sooty mangabey) protein is Hemoglobin subunit alpha (HBA).